Reading from the N-terminus, the 313-residue chain is Dimethyladenosine transferase (313 aa).

The segment at 1–22 (MPKIKSAASGRRRERQQQRGQL) is disordered. Residues His-37, Leu-39, Gly-64, Glu-85, Asp-113, and Asn-128 each coordinate S-adenosyl-L-methionine.

The protein belongs to the class I-like SAM-binding methyltransferase superfamily. rRNA adenine N(6)-methyltransferase family. Part of the small subunit (SSU) processome, composed of more than 70 proteins and the RNA chaperone small nucleolar RNA (snoRNA) U3.

It localises to the nucleus. The protein resides in the nucleoplasm. It is found in the nucleolus. The enzyme catalyses adenosine(1779)/adenosine(1780) in 18S rRNA + 4 S-adenosyl-L-methionine = N(6)-dimethyladenosine(1779)/N(6)-dimethyladenosine(1780) in 18S rRNA + 4 S-adenosyl-L-homocysteine + 4 H(+). Its function is as follows. Specifically dimethylates two adjacent adenosines in the loop of a conserved hairpin near the 3'-end of 18S rRNA in the 40S particle. Involved in the pre-rRNA processing steps leading to small-subunit rRNA production independently of its RNA-modifying catalytic activity. Part of the small subunit (SSU) processome, first precursor of the small eukaryotic ribosomal subunit. During the assembly of the SSU processome in the nucleolus, many ribosome biogenesis factors, an RNA chaperone and ribosomal proteins associate with the nascent pre-rRNA and work in concert to generate RNA folding, modifications, rearrangements and cleavage as well as targeted degradation of pre-ribosomal RNA by the RNA exosome. The chain is Dimethyladenosine transferase (DIMT1) from Bos taurus (Bovine).